Here is a 248-residue protein sequence, read N- to C-terminus: Pyridoxine 5'-phosphate synthase (248 aa).

Asn7 is a 3-amino-2-oxopropyl phosphate binding site. Residue 9-10 participates in 1-deoxy-D-xylulose 5-phosphate binding; sequence DH. A 3-amino-2-oxopropyl phosphate-binding site is contributed by Arg18. His43 (proton acceptor) is an active-site residue. The 1-deoxy-D-xylulose 5-phosphate site is built by Arg45 and His50. Residue Glu70 is the Proton acceptor of the active site. Thr100 is a 1-deoxy-D-xylulose 5-phosphate binding site. His191 acts as the Proton donor in catalysis. 3-amino-2-oxopropyl phosphate is bound by residues Gly192 and 213 to 214; that span reads GH.

This sequence belongs to the PNP synthase family. As to quaternary structure, homooctamer; tetramer of dimers.

The protein resides in the cytoplasm. It catalyses the reaction 3-amino-2-oxopropyl phosphate + 1-deoxy-D-xylulose 5-phosphate = pyridoxine 5'-phosphate + phosphate + 2 H2O + H(+). It functions in the pathway cofactor biosynthesis; pyridoxine 5'-phosphate biosynthesis; pyridoxine 5'-phosphate from D-erythrose 4-phosphate: step 5/5. In terms of biological role, catalyzes the complicated ring closure reaction between the two acyclic compounds 1-deoxy-D-xylulose-5-phosphate (DXP) and 3-amino-2-oxopropyl phosphate (1-amino-acetone-3-phosphate or AAP) to form pyridoxine 5'-phosphate (PNP) and inorganic phosphate. In Bordetella bronchiseptica (strain ATCC BAA-588 / NCTC 13252 / RB50) (Alcaligenes bronchisepticus), this protein is Pyridoxine 5'-phosphate synthase.